The sequence spans 463 residues: Probable ECA polymerase (463 aa).

Transmembrane regions (helical) follow at residues 6–26 (FGGLFVVYLISVIFILSLTWM), 39–59 (FSLLYLLTFYFGFPFTCVLVF), 65–85 (VVPVQFLLQAMLSATAFYAIY), 112–132 (ANLTWLLLALIAVATVGIFFL), 154–174 (GVALKRFFYFFIPAMLVVYFL), 180–200 (AWLMFLIGTVAFGMLTYVIVG), 201–221 (GTRANLIIAFALFLFIGIVRG), 222–242 (WITLWMLVAAGAFGIVGMFWL), 340–360 (LVVMGGVLFIPLGAIAVGLVI), 377–397 (YKAAILQAFCFGAVFNIIVLT), and 408–428 (VVFFCLVFGLCLLVAKLLYWL).

Belongs to the WzyE family. In terms of assembly, probably part of a complex composed of WzxE, WzyE and WzzE.

The protein resides in the cell inner membrane. It participates in bacterial outer membrane biogenesis; enterobacterial common antigen biosynthesis. Its function is as follows. Probably involved in the polymerization of enterobacterial common antigen (ECA) trisaccharide repeat units. This Pectobacterium carotovorum subsp. carotovorum (strain PC1) protein is Probable ECA polymerase.